The sequence spans 314 residues: 4-hydroxy-3-methylbut-2-enyl diphosphate reductase (314 aa).

Cys-12 is a binding site for [4Fe-4S] cluster. Positions 41 and 74 each coordinate (2E)-4-hydroxy-3-methylbut-2-enyl diphosphate. Dimethylallyl diphosphate contacts are provided by His-41 and His-74. 2 residues coordinate isopentenyl diphosphate: His-41 and His-74. Position 96 (Cys-96) interacts with [4Fe-4S] cluster. His-124 contributes to the (2E)-4-hydroxy-3-methylbut-2-enyl diphosphate binding site. Residue His-124 coordinates dimethylallyl diphosphate. His-124 is a binding site for isopentenyl diphosphate. Glu-126 acts as the Proton donor in catalysis. Thr-168 serves as a coordination point for (2E)-4-hydroxy-3-methylbut-2-enyl diphosphate. Cys-198 contributes to the [4Fe-4S] cluster binding site. Ser-226, Ser-227, Asn-228, and Ser-270 together coordinate (2E)-4-hydroxy-3-methylbut-2-enyl diphosphate. Dimethylallyl diphosphate-binding residues include Ser-226, Ser-227, Asn-228, and Ser-270. Ser-226, Ser-227, Asn-228, and Ser-270 together coordinate isopentenyl diphosphate.

The protein belongs to the IspH family. It depends on [4Fe-4S] cluster as a cofactor.

It carries out the reaction isopentenyl diphosphate + 2 oxidized [2Fe-2S]-[ferredoxin] + H2O = (2E)-4-hydroxy-3-methylbut-2-enyl diphosphate + 2 reduced [2Fe-2S]-[ferredoxin] + 2 H(+). The enzyme catalyses dimethylallyl diphosphate + 2 oxidized [2Fe-2S]-[ferredoxin] + H2O = (2E)-4-hydroxy-3-methylbut-2-enyl diphosphate + 2 reduced [2Fe-2S]-[ferredoxin] + 2 H(+). It functions in the pathway isoprenoid biosynthesis; dimethylallyl diphosphate biosynthesis; dimethylallyl diphosphate from (2E)-4-hydroxy-3-methylbutenyl diphosphate: step 1/1. It participates in isoprenoid biosynthesis; isopentenyl diphosphate biosynthesis via DXP pathway; isopentenyl diphosphate from 1-deoxy-D-xylulose 5-phosphate: step 6/6. Functionally, catalyzes the conversion of 1-hydroxy-2-methyl-2-(E)-butenyl 4-diphosphate (HMBPP) into a mixture of isopentenyl diphosphate (IPP) and dimethylallyl diphosphate (DMAPP). Acts in the terminal step of the DOXP/MEP pathway for isoprenoid precursor biosynthesis. This chain is 4-hydroxy-3-methylbut-2-enyl diphosphate reductase, found in Pseudomonas aeruginosa (strain LESB58).